The chain runs to 517 residues: Variant surface glycoprotein MVAT5 (517 aa).

The signal sequence occupies residues 1–21 (MIGKAFIILSLLNELPTPTAA). Cystine bridges form between cysteine 417-cysteine 430 and cysteine 426-cysteine 443. Asparagine 435 carries an N-linked (GlcNAc...) asparagine glycan. Residues 454–470 (QAAQTAGAGEGAAGTTT) are compositionally biased toward low complexity. The tract at residues 454–487 (QAAQTAGAGEGAAGTTTDKCKDKKKDDCKSPDCK) is disordered. The span at 471–487 (DKCKDKKKDDCKSPDCK) shows a compositional bias: basic and acidic residues. Aspartate 495 is lipidated: GPI-anchor amidated aspartate. Residues 496-517 (SSILLNKQFALMVSAAFVALLF) constitute a propeptide, removed in mature form.

The protein localises to the cell membrane. In terms of biological role, VSG forms a coat on the surface of the parasite. The trypanosome evades the immune response of the host by expressing a series of antigenically distinct VSGs from an estimated 1000 VSG genes. The sequence is that of Variant surface glycoprotein MVAT5 from Trypanosoma brucei rhodesiense.